A 367-amino-acid polypeptide reads, in one-letter code: MNIQSIETYQVRLPLKTPFVTSYGRLEEKAFDLFVITDEQGNQGFGELVAFEQPDYVQETLVTERFIIQQHLIPLLLTEAIEQPQEVSTIFEEVKGHWMGKAALETAIWDLYAKRQQKSLTEFFGPTRRKIPVGISLGIQEDLPQLLKQVQLAVEKGYQRVKLKIRPGYDVEPVALIRQHFPNLPLMVDANSAYTLADLPQLQRLDHYQLAMIEQPFAADDFLDHAQLQRELKTRICLDENIRSLKDCQVALALGSCRSINLKIPRVGGIHEALKIAAFCQENDLLVWLGGMFESGVGRALNLQFASQPTFSFPGDISATERYFYEDIITEPFILEQGTMTVPQGLGIGVTLSQTNLLKYSQYQKIM.

The active-site Proton donor is the K164. Mg(2+)-binding residues include D189, E214, and D239. K263 acts as the Proton acceptor in catalysis.

The protein belongs to the mandelate racemase/muconate lactonizing enzyme family. MenC type 2 subfamily. As to quaternary structure, homodimer. It depends on a divalent metal cation as a cofactor.

It catalyses the reaction (1R,6R)-6-hydroxy-2-succinyl-cyclohexa-2,4-diene-1-carboxylate = 2-succinylbenzoate + H2O. It participates in quinol/quinone metabolism; 1,4-dihydroxy-2-naphthoate biosynthesis; 1,4-dihydroxy-2-naphthoate from chorismate: step 4/7. Its pathway is quinol/quinone metabolism; menaquinone biosynthesis. Its function is as follows. Converts 2-succinyl-6-hydroxy-2,4-cyclohexadiene-1-carboxylate (SHCHC) to 2-succinylbenzoate (OSB). Also acts as a N-succinylamino acid racemase (NSAR) that catalyzes the racemization of N-succinyl-L-phenylglycine. Since the gene is encoded in a menaquinone synthesis operon, OSB synthase is probably the physiological activity. A pathway that requires NSAR activity has not been identified in this species, so whether NSAR is also a biological activity is unknown. This is o-succinylbenzoate synthase from Enterococcus faecalis (strain ATCC 700802 / V583).